The sequence spans 365 residues: Sulfotransferase 2B1 (365 aa).

Position 70–75 (70–75) interacts with 3'-phosphoadenylyl sulfate; that stretch reads KSGTTW. Residues Trp-98, Trp-103, and His-125 each coordinate substrate. The active-site Proton acceptor is the His-125. Residues Arg-147, Ser-155, Tyr-210, 244–249, and 274–276 contribute to the 3'-phosphoadenylyl sulfate site; these read STFSAM and RKG. The tract at residues 303–365 is disordered; it reads GMPTFPWDED…ASETPHPRPS (63 aa). The segment covering 309 to 325 has biased composition (acidic residues); it reads WDEDPEEDGSPDPEPSP. Ser-348 is modified (phosphoserine).

The protein belongs to the sulfotransferase 1 family. Post-translationally, phosphorylated. Expressed in the stratum granulosum-stratum corneum junction in the skin (at protein level). Expressed highly in placenta, prostate and trachea and lower expression in the small intestine and lung.

The protein resides in the cytoplasm. It localises to the cytosol. It is found in the microsome. The protein localises to the nucleus. The catalysed reaction is an alcohol + 3'-phosphoadenylyl sulfate = an alkyl sulfate + adenosine 3',5'-bisphosphate + H(+). It catalyses the reaction 3beta-hydroxyandrost-5-en-17-one + 3'-phosphoadenylyl sulfate = dehydroepiandrosterone 3-sulfate + adenosine 3',5'-bisphosphate + H(+). The enzyme catalyses (24S)-hydroxycholesterol + 3'-phosphoadenylyl sulfate = (24S)-hydroxycholesterol 3-sulfate + adenosine 3',5'-bisphosphate + H(+). It carries out the reaction cholesterol + 3'-phosphoadenylyl sulfate = cholesterol sulfate + adenosine 3',5'-bisphosphate + H(+). The catalysed reaction is pregnenolone + 3'-phosphoadenylyl sulfate = pregnenolone sulfate + adenosine 3',5'-bisphosphate + H(+). Functionally, sulfotransferase that utilizes 3'-phospho-5'-adenylyl sulfate (PAPS) as sulfonate donor to catalyze the sulfate conjugation. Responsible for the sulfation of cholesterol. Catalyzes sulfation of the 3beta-hydroxyl groups of steroids, such as, pregnenolone and dehydroepiandrosterone (DHEA). Preferentially sulfonates cholesterol, while it also has significant activity with pregnenolone and DHEA. Plays a role in epidermal cholesterol metabolism and in the regulation of epidermal proliferation and differentiation. Its function is as follows. Sulfonates pregnenolone but not cholesterol. This is Sulfotransferase 2B1 (SULT2B1) from Homo sapiens (Human).